The following is a 189-amino-acid chain: Ribonuclease HII (189 aa).

An RNase H type-2 domain is found at 1–189; the sequence is MIAGVDEAGR…PVRRALNIDC (189 aa). A divalent metal cation-binding residues include aspartate 6, glutamate 7, and aspartate 98.

The protein belongs to the RNase HII family. Mn(2+) is required as a cofactor. It depends on Mg(2+) as a cofactor.

Its subcellular location is the cytoplasm. It catalyses the reaction Endonucleolytic cleavage to 5'-phosphomonoester.. In terms of biological role, endonuclease that specifically degrades the RNA of RNA-DNA hybrids. This chain is Ribonuclease HII, found in Acinetobacter baylyi (strain ATCC 33305 / BD413 / ADP1).